Here is a 418-residue protein sequence, read N- to C-terminus: Deubiquitinase and deneddylase Dub1 (418 aa).

The span at 1–10 (MLSPTNSISK) shows a compositional bias: polar residues. The disordered stretch occupies residues 1 to 23 (MLSPTNSISKTAPVPPQDSSKPV). The helical transmembrane segment at 40–60 (TALAVLLVVVTLGLILLFYSF) threads the bilayer. Residues 72–144 (TRPSTKEQPT…PLPPKAPKPV (73 aa)) form a disordered region. A compositionally biased stretch (pro residues) spans 86–141 (VPLPSPPLAVPRPSTPPPPVISRPSTPPAPTPAISPPSTPSAPKPSTPPPLPPKAP). Residues His-288, Asp-305, and Cys-358 contribute to the active site.

It belongs to the peptidase C48 family.

It is found in the secreted. The protein resides in the host cell. Its subcellular location is the membrane. Functionally, effector proteins function to alter host cell physiology and promote bacterial survival in host tissues. This protease possesses deubiquitinating and deneddylating activities. The polypeptide is Deubiquitinase and deneddylase Dub1 (cdu1) (Chlamydia trachomatis serovar B (strain Jali20/OT)).